Here is a 619-residue protein sequence, read N- to C-terminus: Long-chain fatty acid transport protein 6 (619 aa).

Transmembrane regions (helical) follow at residues 22 to 42 (LLFPYFWDDFWYLLKVVRYGI) and 119 to 139 (VHVWFGLAKLGCVVAFLNSNL). Residue 221–232 (YIFTSGTTGLPK) coordinates AMP.

Belongs to the ATP-dependent AMP-binding enzyme family.

It is found in the cell membrane. Its subcellular location is the sarcolemma. The enzyme catalyses a fatty acid(in) = a fatty acid(out). The catalysed reaction is hexadecanoate(out) = hexadecanoate(in). It catalyses the reaction (9Z,12Z)-octadecadienoate(out) = (9Z,12Z)-octadecadienoate(in). It carries out the reaction (9Z)-octadecenoate(out) = (9Z)-octadecenoate(in). The enzyme catalyses a very long-chain fatty acid + ATP + CoA = a very long-chain fatty acyl-CoA + AMP + diphosphate. The catalysed reaction is tetracosanoate + ATP + CoA = tetracosanoyl-CoA + AMP + diphosphate. It catalyses the reaction a long-chain fatty acid + ATP + CoA = a long-chain fatty acyl-CoA + AMP + diphosphate. It carries out the reaction (9Z)-octadecenoate + ATP + CoA = (9Z)-octadecenoyl-CoA + AMP + diphosphate. The enzyme catalyses (5Z,8Z,11Z,14Z)-eicosatetraenoate + ATP + CoA = (5Z,8Z,11Z,14Z)-eicosatetraenoyl-CoA + AMP + diphosphate. Functionally, mediates the import of long-chain fatty acids (LCFA) into the cell by facilitating their transport at the plasma membrane. Also functions as an acyl-CoA ligase catalyzing the ATP-dependent formation of fatty acyl-CoA using LCFA and very-long-chain fatty acids (VLCFA) as substrates. Plays a pivotal role in regulating available LCFA substrates from exogenous sources in tissues undergoing high levels of beta-oxidation such as the heart. This Mus musculus (Mouse) protein is Long-chain fatty acid transport protein 6 (Slc27a6).